We begin with the raw amino-acid sequence, 1364 residues long: DNA-directed RNA polymerase subunit beta' (1364 aa).

The tract at residues 1 to 42 is disordered; the sequence is MTSSSSKSNKSRKSSKAAKDTTPVHESASRPLSKTPPPFRNH. Residues Cys-250, Cys-317, Cys-324, and Cys-327 each coordinate Zn(2+).

The protein belongs to the RNA polymerase beta' chain family. RpoC2 subfamily. In terms of assembly, in cyanobacteria the RNAP catalytic core is composed of 2 alpha, 1 beta, 1 beta', 1 gamma and 1 omega subunit. When a sigma factor is associated with the core the holoenzyme is formed, which can initiate transcription. Zn(2+) serves as cofactor.

The enzyme catalyses RNA(n) + a ribonucleoside 5'-triphosphate = RNA(n+1) + diphosphate. In terms of biological role, DNA-dependent RNA polymerase catalyzes the transcription of DNA into RNA using the four ribonucleoside triphosphates as substrates. In Parasynechococcus marenigrum (strain WH8102), this protein is DNA-directed RNA polymerase subunit beta'.